The sequence spans 458 residues: MLLLLPEITLTLIALLGQFFAVMIPNKNRIISNIIILLCILSIFLTFKYSSYEGVWYSFATGINIGISKSIVLLFTIISMIIYRDYSILVADELKFEFITLMLLSVVGIFVAISSRNFLLLFCGMELTALTSYALAGFKLNDMKSSEGALKYFILGSLVSCLSLFGISFIYGFGGSLQFEDILYKLNDNSGMNLGLIIGIILFLSSIFFKLSSVPLHFWVPDVYEGSPITSVTYFNAASKIGMVIVLLNISKLIIGNYYPINYNLIKIIAILSMLFGAFGAIRQTSLKRLMAYSTILNIGYVLIGVLLHNQEGYKAALLYMLIYAVGSIGFFTCLIILLGKDVDKASFKTIQGIAEYHKTIAAVISIVMFSMIGIPPLTGFFGKYYLFYQAINQEEFALAYCGIFTSVVAAFYYLKVVKAMYFSKKIEIIKLPMQYGLLLINYLVVGFLLLGSFIISF.

A run of 14 helical transmembrane segments spans residues 2-22 (LLLLPEITLTLIALLGQFFAV), 30-50 (IISNIIILLCILSIFLTFKYS), 62-82 (GINIGISKSIVLLFTIISMII), 94-114 (LKFEFITLMLLSVVGIFVAIS), 118-138 (FLLLFCGMELTALTSYALAGF), 153-173 (FILGSLVSCLSLFGISFIYGF), 194-214 (LGLIIGIILFLSSIFFKLSSV), 235-255 (FNAASKIGMVIVLLNISKLII), 261-281 (INYNLIKIIAILSMLFGAFGA), 290-310 (LMAYSTILNIGYVLIGVLLHN), 318-338 (LLYMLIYAVGSIGFFTCLIIL), 361-381 (IAAVISIVMFSMIGIPPLTGF), 397-417 (FALAYCGIFTSVVAAFYYLKV), and 438-458 (LLLINYLVVGFLLLGSFIISF).

Belongs to the complex I subunit 2 family. NDH-1 is composed of 14 different subunits. Subunits NuoA, H, J, K, L, M, N constitute the membrane sector of the complex.

It localises to the cell inner membrane. The catalysed reaction is a quinone + NADH + 5 H(+)(in) = a quinol + NAD(+) + 4 H(+)(out). Functionally, NDH-1 shuttles electrons from NADH, via FMN and iron-sulfur (Fe-S) centers, to quinones in the respiratory chain. The immediate electron acceptor for the enzyme in this species is believed to be ubiquinone. Couples the redox reaction to proton translocation (for every two electrons transferred, four hydrogen ions are translocated across the cytoplasmic membrane), and thus conserves the redox energy in a proton gradient. The sequence is that of NADH-quinone oxidoreductase subunit N from Rickettsia conorii (strain ATCC VR-613 / Malish 7).